A 391-amino-acid chain; its full sequence is Phosphoglycerate kinase (391 aa).

Substrate is bound by residues 21-23 (DLN), arginine 36, 59-62 (HRGR), arginine 113, and arginine 146. ATP is bound by residues lysine 197, glutamate 314, and 340–343 (GGDT).

Belongs to the phosphoglycerate kinase family. Monomer.

The protein localises to the cytoplasm. It catalyses the reaction (2R)-3-phosphoglycerate + ATP = (2R)-3-phospho-glyceroyl phosphate + ADP. The protein operates within carbohydrate degradation; glycolysis; pyruvate from D-glyceraldehyde 3-phosphate: step 2/5. The protein is Phosphoglycerate kinase of Ruthia magnifica subsp. Calyptogena magnifica.